Reading from the N-terminus, the 303-residue chain is Probable 5-dehydro-4-deoxyglucarate dehydratase (303 aa).

The protein belongs to the DapA family.

It catalyses the reaction 5-dehydro-4-deoxy-D-glucarate + H(+) = 2,5-dioxopentanoate + CO2 + H2O. Its pathway is carbohydrate acid metabolism; D-glucarate degradation; 2,5-dioxopentanoate from D-glucarate: step 2/2. In Pseudomonas putida (strain ATCC 700007 / DSM 6899 / JCM 31910 / BCRC 17059 / LMG 24140 / F1), this protein is Probable 5-dehydro-4-deoxyglucarate dehydratase.